The primary structure comprises 229 residues: Ribonuclease 3 (229 aa).

Positions 5–127 (LARLERQLGY…LIGAIYLDAG (123 aa)) constitute an RNase III domain. Glutamate 40 provides a ligand contact to Mg(2+). Residue aspartate 44 is part of the active site. Mg(2+)-binding residues include aspartate 113 and glutamate 116. Glutamate 116 is a catalytic residue. The DRBM domain occupies 154–224 (DPKTRLQEFL…AAAALIALGV (71 aa)).

Belongs to the ribonuclease III family. In terms of assembly, homodimer. Requires Mg(2+) as cofactor.

The protein localises to the cytoplasm. It catalyses the reaction Endonucleolytic cleavage to 5'-phosphomonoester.. Functionally, digests double-stranded RNA. Involved in the processing of primary rRNA transcript to yield the immediate precursors to the large and small rRNAs (23S and 16S). Processes some mRNAs, and tRNAs when they are encoded in the rRNA operon. Processes pre-crRNA and tracrRNA of type II CRISPR loci if present in the organism. The polypeptide is Ribonuclease 3 (Pseudomonas fluorescens (strain SBW25)).